The following is a 507-amino-acid chain: Arabinose import ATP-binding protein AraG (507 aa).

2 ABC transporter domains span residues 14–249 (LRFN…MVGR) and 249–505 (RDIQ…LPRT). Residue 46-53 (GENGAGKS) coordinates ATP.

The protein belongs to the ABC transporter superfamily. Arabinose importer (TC 3.A.1.2.2) family. As to quaternary structure, the complex is composed of two ATP-binding proteins (AraG), two transmembrane proteins (AraH) and a solute-binding protein (AraF).

The protein localises to the cell inner membrane. The enzyme catalyses L-arabinose(out) + ATP + H2O = L-arabinose(in) + ADP + phosphate + H(+). Its function is as follows. Part of the ABC transporter complex AraFGH involved in arabinose import. Responsible for energy coupling to the transport system. The chain is Arabinose import ATP-binding protein AraG from Pseudomonas savastanoi pv. phaseolicola (strain 1448A / Race 6) (Pseudomonas syringae pv. phaseolicola (strain 1448A / Race 6)).